The following is a 345-amino-acid chain: Anthranilate phosphoribosyltransferase 1 (345 aa).

5-phospho-alpha-D-ribose 1-diphosphate contacts are provided by residues Gly86, 89–90 (GD), Thr94, 96–99 (NIST), 114–122 (KHGGRGVSS), and Ser126. Gly86 is an anthranilate binding site. Ser98 is a Mg(2+) binding site. Arg172 lines the anthranilate pocket. Mg(2+) contacts are provided by Asp231 and Glu232.

It belongs to the anthranilate phosphoribosyltransferase family. As to quaternary structure, homodimer. Requires Mg(2+) as cofactor.

The enzyme catalyses N-(5-phospho-beta-D-ribosyl)anthranilate + diphosphate = 5-phospho-alpha-D-ribose 1-diphosphate + anthranilate. It participates in amino-acid biosynthesis; L-tryptophan biosynthesis; L-tryptophan from chorismate: step 2/5. Its function is as follows. Catalyzes the transfer of the phosphoribosyl group of 5-phosphorylribose-1-pyrophosphate (PRPP) to anthranilate to yield N-(5'-phosphoribosyl)-anthranilate (PRA). This Ralstonia nicotianae (strain ATCC BAA-1114 / GMI1000) (Ralstonia solanacearum) protein is Anthranilate phosphoribosyltransferase 1.